The primary structure comprises 61 residues: Large ribosomal subunit protein uL30 (61 aa).

Belongs to the universal ribosomal protein uL30 family. In terms of assembly, part of the 50S ribosomal subunit.

The protein is Large ribosomal subunit protein uL30 of Legionella pneumophila (strain Paris).